Consider the following 223-residue polypeptide: Putative archaetidylserine decarboxylase proenzyme (223 aa).

Serine 183 (schiff-base intermediate with substrate; via pyruvic acid) is an active-site residue. Position 183 is a pyruvic acid (Ser); by autocatalysis (serine 183).

The protein belongs to the phosphatidylserine decarboxylase family. PSD-A subfamily. In terms of assembly, heterodimer of a large membrane-associated beta subunit and a small pyruvoyl-containing alpha subunit. Pyruvate is required as a cofactor. Is synthesized initially as an inactive proenzyme. Formation of the active enzyme involves a self-maturation process in which the active site pyruvoyl group is generated from an internal serine residue via an autocatalytic post-translational modification. Two non-identical subunits are generated from the proenzyme in this reaction, and the pyruvate is formed at the N-terminus of the alpha chain, which is derived from the carboxyl end of the proenzyme. The post-translation cleavage follows an unusual pathway, termed non-hydrolytic serinolysis, in which the side chain hydroxyl group of the serine supplies its oxygen atom to form the C-terminus of the beta chain, while the remainder of the serine residue undergoes an oxidative deamination to produce ammonia and the pyruvoyl prosthetic group on the alpha chain.

The protein localises to the cell membrane. The enzyme catalyses archaetidylserine + H(+) = archaetidylethanolamine + CO2. Its function is as follows. Catalyzes the formation of archaetidylethanolamine (PtdEtn) from archaetidylserine (PtdSer). In Methanothermobacter thermautotrophicus (strain ATCC 29096 / DSM 1053 / JCM 10044 / NBRC 100330 / Delta H) (Methanobacterium thermoautotrophicum), this protein is Putative archaetidylserine decarboxylase proenzyme.